The sequence spans 165 residues: MRYFVIGTMIALAGLLVGGGVGSYFTSSKLLKQFQNIPGSPIVLSATYNKEKHLIAYTISNPGTLPIKITEKAFVFTPGKESKEKGYVLSNIPANVTIPPLSVAIVELKLKEGTEKLKVGDLVVATFTYTHPLSQDIYTVVHPFTYGVKEKQQTEKKEEKKEESK.

A helical transmembrane segment spans residues 4–26; sequence FVIGTMIALAGLLVGGGVGSYFT.

It localises to the membrane. This is an uncharacterized protein from Aquifex aeolicus (strain VF5).